The primary structure comprises 282 residues: NADPH-dependent 7-cyano-7-deazaguanine reductase (282 aa).

88 to 90 (IES) serves as a coordination point for substrate. 90-91 (SK) contributes to the NADPH binding site. Residue cysteine 190 is the Thioimide intermediate of the active site. Aspartate 197 (proton donor) is an active-site residue. Substrate is bound at residue 229–230 (HE). NADPH is bound at residue 258–259 (RG).

Belongs to the GTP cyclohydrolase I family. QueF type 2 subfamily. Homodimer.

Its subcellular location is the cytoplasm. The catalysed reaction is 7-aminomethyl-7-carbaguanine + 2 NADP(+) = 7-cyano-7-deazaguanine + 2 NADPH + 3 H(+). Its pathway is tRNA modification; tRNA-queuosine biosynthesis. In terms of biological role, catalyzes the NADPH-dependent reduction of 7-cyano-7-deazaguanine (preQ0) to 7-aminomethyl-7-deazaguanine (preQ1). The sequence is that of NADPH-dependent 7-cyano-7-deazaguanine reductase from Escherichia coli O17:K52:H18 (strain UMN026 / ExPEC).